We begin with the raw amino-acid sequence, 714 residues long: MYRALYAFRSAEPNAMAFAAGETFLVLERSSTHWWLAARARSGETGYVPPAYLHRLQGMEQDVLQAIDRAIEAVHNTAMRDGGKYSLEQRGVLQKLIHHRKETLSRRGTSASSATVMTPSTSDHHLDAAVSRQPNGVCRTGFERQHSLPSSEHLGTDGALYQVPPQPRRAAPTTPPPPVKRRDREALVISGSGGRTAIPSGGSSVSSGSSASSTSMDTLYTGSSPSELGPSCSPTPPPVPRRGAHTTVSQPQPSPSKAPSPEPPTEEVAAETNSTPDDLEAQDALSPETTEEKAAAETVVPRTIGAELMELVRRNTGLSHELCRVAIGVVVGHIQATVPASSPIMEQVLLSLVEGKDLSTALPSGQVCHDQQRLEVIFADLARRKDDAQQRSWALYEDEDVIRCYLEELLHILTDADPEVCKKMCKRSDFESVLALVAYYQMEHRASLRLLLLKCFGAMCSLDAAIISTLVSSVLPVELARDMQTDTQDHQKLCYSALVLAMVFSMGEAVPYAHYEHLGTPFAQFLLSIVEDGLPMDTTEQLPDLCMNLLLALNLHLTAPEQNVIMAALSRHTNVKIFSEKLLLLLNRGDDPVRIFRHEPQPPHSVLKFLQDVFSSSATAAIFYHTDMMALIDITVRQIADLSPGDKLRMEYLSLMHAVVRSTPYLQHRHRLSDLQATLRRILTEEEASPQCQMDRMIVQEMYKEFPDLGEVPS.

The region spanning 1–58 (MYRALYAFRSAEPNAMAFAAGETFLVLERSSTHWWLAARARSGETGYVPPAYLHRLQG) is the SH3 domain. Disordered stretches follow at residues 103–126 (TLSR…DHHL) and 139–298 (RTGF…AAET). Residues 106–121 (RRGTSASSATVMTPST) are compositionally biased toward polar residues. A Phosphoserine modification is found at Ser120. Positions 168-185 (RRAAPTTPPPPVKRRDRE) match the Nuclear localization signal motif. At Thr174 the chain carries Phosphothreonine. Positions 200-215 (SGGSSVSSGSSASSTS) are enriched in low complexity. The segment covering 216–226 (MDTLYTGSSPS) has biased composition (polar residues). A compositionally biased stretch (pro residues) spans 252 to 263 (QPSPSKAPSPEP). Residues Ser260, Ser286, and Ser673 each carry the phosphoserine modification.

As to quaternary structure, associates with the intermediate filaments, vimentin and desmin. Binds the first and third SH3 domains of NCK. Binds the proline-rich domains of N-WASP through its SH3 domain. Similarly, binds diaphanous protein homolog 1 (DRF1). Binds the SH3 domains of GRB2 through its proline-rich domains. Interacts with FASLG.

It localises to the nucleus. Its function is as follows. Has an important role in stress fiber formation induced by active diaphanous protein homolog 1 (DRF1). Induces microspike formation, in vivo. In vitro, stimulates N-WASP-induced ARP2/3 complex activation in the absence of CDC42. May play an important role in the maintenance of sarcomere and/or in the assembly of myofibrils into sarcomeres. Implicated in regulation of actin polymerization and cell adhesion. This is NCK-interacting protein with SH3 domain (Nckipsd) from Mus musculus (Mouse).